The chain runs to 272 residues: Shikimate dehydrogenase (NADP(+)) (272 aa).

Shikimate is bound by residues 14 to 16 (SKS) and T61. K65 functions as the Proton acceptor in the catalytic mechanism. An NADP(+)-binding site is contributed by E77. Residues N86 and D102 each coordinate shikimate. NADP(+)-binding positions include 126-130 (GAGGA), 149-154 (NRTVSR), and M213. Y215 serves as a coordination point for shikimate. G237 serves as a coordination point for NADP(+).

It belongs to the shikimate dehydrogenase family. As to quaternary structure, homodimer.

The enzyme catalyses shikimate + NADP(+) = 3-dehydroshikimate + NADPH + H(+). It participates in metabolic intermediate biosynthesis; chorismate biosynthesis; chorismate from D-erythrose 4-phosphate and phosphoenolpyruvate: step 4/7. Its function is as follows. Involved in the biosynthesis of the chorismate, which leads to the biosynthesis of aromatic amino acids. Catalyzes the reversible NADPH linked reduction of 3-dehydroshikimate (DHSA) to yield shikimate (SA). The sequence is that of Shikimate dehydrogenase (NADP(+)) from Escherichia coli (strain K12 / MC4100 / BW2952).